Reading from the N-terminus, the 301-residue chain is Mycothiol acetyltransferase (301 aa).

N-acetyltransferase domains are found at residues V7–D150 and V152–G301. D39 provides a ligand contact to 1D-myo-inositol 2-(L-cysteinylamino)-2-deoxy-alpha-D-glucopyranoside. Acetyl-CoA contacts are provided by residues L80–V82 and R88–S93. 1D-myo-inositol 2-(L-cysteinylamino)-2-deoxy-alpha-D-glucopyranoside-binding residues include E179, K220, and E228. V232 to V234 is an acetyl-CoA binding site. Y271 contacts 1D-myo-inositol 2-(L-cysteinylamino)-2-deoxy-alpha-D-glucopyranoside. Residue N276–K281 coordinates acetyl-CoA.

The protein belongs to the acetyltransferase family. MshD subfamily. Monomer.

It carries out the reaction 1D-myo-inositol 2-(L-cysteinylamino)-2-deoxy-alpha-D-glucopyranoside + acetyl-CoA = mycothiol + CoA + H(+). Its function is as follows. Catalyzes the transfer of acetyl from acetyl-CoA to desacetylmycothiol (Cys-GlcN-Ins) to form mycothiol. This chain is Mycothiol acetyltransferase, found in Mycolicibacterium vanbaalenii (strain DSM 7251 / JCM 13017 / BCRC 16820 / KCTC 9966 / NRRL B-24157 / PYR-1) (Mycobacterium vanbaalenii).